The sequence spans 588 residues: Tannase (588 aa).

Positions 1-18 (MRQHSRMAVAALAAGANA) are cleaved as a signal peptide. 3 disulfides stabilise this stretch: Cys25/Cys71, Cys194/Cys502, and Cys261/Cys278. Ser195 acts as the Acyl-ester intermediate in catalysis. Residues Asp262, Asp265, Asp269, and Val271 each contribute to the Ca(2+) site. Position 317 is a pyrrolidone carboxylic acid (Gln317). Active-site charge relay system residues include Asp455 and His501.

This sequence belongs to the tannase family. Heterooctamer of 4 33 kDa and 4 30 kDa subunits linked by disulfide bond(s). The protein is glycosylated to a carbohydrate content of 22.7%. Post-translationally, the N-terminus of the 30 kDa subunit is blocked.

It carries out the reaction digallate + H2O = 2 3,4,5-trihydroxybenzoate + H(+). Functionally, hydrolyzes ester bonds of tannic acid to produce gallic acid and glucose. This is Tannase from Aspergillus oryzae (strain ATCC 42149 / RIB 40) (Yellow koji mold).